The following is a 196-amino-acid chain: GTP cyclohydrolase-2 (196 aa).

49–53 is a binding site for GTP; sequence RVHSE. Zn(2+) is bound by residues Cys-54, Cys-65, and Cys-67. Residues Gln-70, 92-94, and Thr-114 each bind GTP; that span reads EGR. Asp-126 (proton acceptor) is an active-site residue. The Nucleophile role is filled by Arg-128. Positions 149 and 154 each coordinate GTP.

It belongs to the GTP cyclohydrolase II family. Homodimer. Zn(2+) serves as cofactor.

It carries out the reaction GTP + 4 H2O = 2,5-diamino-6-hydroxy-4-(5-phosphoribosylamino)-pyrimidine + formate + 2 phosphate + 3 H(+). It functions in the pathway cofactor biosynthesis; riboflavin biosynthesis; 5-amino-6-(D-ribitylamino)uracil from GTP: step 1/4. In terms of biological role, catalyzes the conversion of GTP to 2,5-diamino-6-ribosylamino-4(3H)-pyrimidinone 5'-phosphate (DARP), formate and pyrophosphate. The chain is GTP cyclohydrolase-2 from Enterobacter sp. (strain 638).